The following is a 404-amino-acid chain: MHC class I-like protein MILL1 (404 aa).

Positions Met1–Ala30 are cleaved as a signal peptide. Residues Glu59–Gly150 are alpha-1. 3 N-linked (GlcNAc...) asparagine glycosylation sites follow: Asn98, Asn102, and Asn165. Positions Leu151–Gly242 are alpha-2. Intrachain disulfides connect Cys160/Cys223 and Cys262/Cys322. The region spanning Pro224–Val338 is the Ig-like C1-type domain. The alpha-3 stretch occupies residues Ser243–Ser342. N-linked (GlcNAc...) asparagine glycosylation is present at Asn323. The interval Gly343–Thr373 is connecting peptide. Residue Ser374 is the site of GPI-anchor amidated serine attachment. Positions Trp375–Val404 are cleaved as a propeptide — removed in mature form.

It belongs to the MHC class I family. Heterodimer with B2M. As to expression, detected in skin, esophagus, tongue, skin, muscle, uterus, ovary, testis and epididymis.

It is found in the cell membrane. This Rattus norvegicus (Rat) protein is MHC class I-like protein MILL1.